A 1717-amino-acid polypeptide reads, in one-letter code: DNA-directed RNA polymerase I subunit RPA1 (1717 aa).

6 residues coordinate Zn(2+): cysteine 64, cysteine 67, cysteine 74, histidine 77, cysteine 104, and cysteine 107. Residues 110 to 201 are clamp; it reads LTCPRAAIYL…VAQFWKTHMA (92 aa). Positions 205 and 208 each coordinate Zn(2+). Positions 327–433 are clamp; sequence FTNGQTVNLQ…IRQILEKKEG (107 aa). The interval 410 to 423 is rudder; the sequence is DSEMDKLMLEKYPG. Lysine 431, arginine 436, and arginine 443 together coordinate DNA. The tract at residues 475-549 is involved in RRN3 binding to Pol I complex; the sequence is YPQPVTPWNV…QGTKVVCRHV (75 aa). Arginine 559 is an RNA binding site. Residues aspartate 595, aspartate 597, and aspartate 599 each contribute to the Mg(2+) site. Aspartate 599 serves as a coordination point for RNA. Residues 812-890 are funnel; that stretch reads KPNADVVRQR…NEINKACMPL (79 aa). The interval 967–1008 is bridging helix; sequence RPPEFFFHCMAGREGLVDTAVKTSRSGYLQRCIIKHLEGLVI. A mediates the interaction with TOP2A region spans residues 1067–1162; that stretch reads ADPQKVLGHI…SLSVWRPDIY (96 aa). Residues 1214–1255 form a trigger loop region; sequence PGEAVGLLAAQSIGEPSTQMTLNTFHFAGRGEMNVTLGIPRL. Arginine 1256 lines the DNA pocket. Residues 1372–1493 are disordered; sequence RNVNSRRATQ…RRHSRPQGAE (122 aa). Over residues 1380–1397 the composition is skewed to basic and acidic residues; it reads TQKDLNDTEDSGRSQREE. A Phosphoserine modification is found at serine 1393. 2 stretches are compositionally biased toward acidic residues: residues 1398–1419 and 1429–1450; these read ERDE…DADA and EEEV…EVQE. The span at 1452–1464 shows a compositional bias: basic and acidic residues; that stretch reads GNIKGDGVHQGHE. The segment covering 1465–1477 has biased composition (acidic residues); that stretch reads PDEEEHLGLEEEE.

This sequence belongs to the RNA polymerase beta' chain family. As to quaternary structure, component of the RNA polymerase I (Pol I) complex consisting of 13 subunits: a ten-subunit catalytic core composed of POLR1A/RPA1, POLR1B/RPA2, POLR1C/RPAC1, POLR1D/RPAC2, POLR1H/RPA12, POLR2E/RPABC1, POLR2F/RPABC2, POLR2H/RPABC3, POLR2K/RPABC4 and POLR2L/RPABC5; a mobile stalk subunit POLR1F/RPA43 protruding from the core and additional subunits homologous to general transcription factors POLR1E/RPA49 and POLR1G/RPA34. Part of Pol I pre-initiation complex (PIC), in which Pol I core assembles with RRN3 and promoter-bound UTBF and SL1/TIF-IB complex. Interacts (via dock II domain) with TOP2A; this interaction may assist Pol I transcription initiation by releasing supercoils occurring during DNA unwinding. Interacts with CAVIN1; this interaction induces the dissociation of Pol I complex paused at rDNA terminator sequences. Interacts with MYO1C. Interacts with ERBB2. Interacts with DDX11. Interacts with RECQL5. It depends on Mg(2+) as a cofactor. Phosphorylated.

It localises to the nucleus. The protein localises to the nucleolus. It is found in the chromosome. The catalysed reaction is RNA(n) + a ribonucleoside 5'-triphosphate = RNA(n+1) + diphosphate. Catalytic core component of RNA polymerase I (Pol I), a DNA-dependent RNA polymerase which synthesizes ribosomal RNA precursors using the four ribonucleoside triphosphates as substrates. Transcribes 47S pre-rRNAs from multicopy rRNA gene clusters, giving rise to 5.8S, 18S and 28S ribosomal RNAs. Pol I-mediated transcription cycle proceeds through transcription initiation, transcription elongation and transcription termination stages. During transcription initiation, Pol I pre-initiation complex (PIC) is recruited by the selectivity factor 1 (SL1/TIF-IB) complex bound to the core promoter that precedes an rDNA repeat unit. The PIC assembly bends the promoter favoring the formation of the transcription bubble and promoter escape. Once the polymerase has escaped from the promoter it enters the elongation phase during which RNA is actively polymerized, based on complementarity with the template DNA strand. Highly processive, assembles in structures referred to as 'Miller trees' where many elongating Pol I complexes queue and transcribe the same rDNA coding regions. At terminator sequences downstream of the rDNA gene, PTRF interacts with Pol I and halts Pol I transcription leading to the release of the RNA transcript and polymerase from the DNA. Forms Pol I active center together with the second largest subunit POLR1B/RPA2. Appends one nucleotide at a time to the 3' end of the nascent RNA, with POLR1A/RPA1 contributing a Mg(2+)-coordinating DxDGD motif, and POLR1B/RPA2 participating in the coordination of a second Mg(2+) ion and providing lysine residues believed to facilitate Watson-Crick base pairing between the incoming nucleotide and the template base. Typically, Mg(2+) ions direct a 5' nucleoside triphosphate to form a phosphodiester bond with the 3' hydroxyl of the preceding nucleotide of the nascent RNA, with the elimination of pyrophosphate. Has proofreading activity: Pauses and backtracks to allow the cleavage of a missincorporated nucleotide via POLR1H/RPA12. High Pol I processivity is associated with decreased transcription fidelity. In Mus musculus (Mouse), this protein is DNA-directed RNA polymerase I subunit RPA1.